A 378-amino-acid chain; its full sequence is Deoxyguanosinetriphosphate triphosphohydrolase-like protein (378 aa).

The tract at residues 1–28 (MLAPFACQPGESRGRQKPESMSTFRSPF) is disordered. Positions 62–198 (RLTHSIEVAQ…AAIADDVAYS (137 aa)) constitute an HD domain.

It belongs to the dGTPase family. Type 2 subfamily.

The polypeptide is Deoxyguanosinetriphosphate triphosphohydrolase-like protein (Cereibacter sphaeroides (strain ATCC 17029 / ATH 2.4.9) (Rhodobacter sphaeroides)).